The primary structure comprises 332 residues: Anthranilate phosphoribosyltransferase (332 aa).

5-phospho-alpha-D-ribose 1-diphosphate contacts are provided by residues glycine 79, 82–83 (GD), threonine 87, 89–92 (NIST), 107–115 (KHGNRSVSS), and serine 119. Glycine 79 provides a ligand contact to anthranilate. Serine 91 is a Mg(2+) binding site. Asparagine 110 is a binding site for anthranilate. Position 165 (arginine 165) interacts with anthranilate. Mg(2+) contacts are provided by aspartate 223 and glutamate 224.

This sequence belongs to the anthranilate phosphoribosyltransferase family. Homodimer. It depends on Mg(2+) as a cofactor.

The enzyme catalyses N-(5-phospho-beta-D-ribosyl)anthranilate + diphosphate = 5-phospho-alpha-D-ribose 1-diphosphate + anthranilate. It functions in the pathway amino-acid biosynthesis; L-tryptophan biosynthesis; L-tryptophan from chorismate: step 2/5. Catalyzes the transfer of the phosphoribosyl group of 5-phosphorylribose-1-pyrophosphate (PRPP) to anthranilate to yield N-(5'-phosphoribosyl)-anthranilate (PRA). This Vibrio vulnificus (strain CMCP6) protein is Anthranilate phosphoribosyltransferase.